The following is a 459-amino-acid chain: MNRLPSSASALAYSAHALNLIEKRTLDHEEMKALNREVIEYFKEHVNPGFLEYRKSVTAGGDYGAVEWQAGGLNTLVDTQGQEFIDCLGGFGIFNVGHRNPVVVSAVQNQLAKQPLHSQELLDPLRAMLAKTLAALTPGKLKYSFFCNSGTESVEAALKLAKAYQSPRGKFTFIATSGAFHGKSLGALSATAKSTFRKPFMPLLPGFRHVPFGNIEAMRTALSECKKTGDDVAAVILEPIQGEGGVILPPPGYLTAVRKLCDEFGALMILDEVQTGMGRTGKMFACEHENVQPDILCLAKALGGGVMPIGATIATEEVFSVLFDNPFLHTTTFGGNPLACAAALATINVLLEQNLPAQAEQKGDMLLDGFRQLAREYPDLVQEARGKGMLMAIEFVDNEIGYNFASEMFRQRVLVAGTLNNAKTIRIEPPLTLTIEQCEQVIKAARKALAAMRVSVEEA.

Residues 150 to 151 and Q274 contribute to the pyridoxal 5'-phosphate site; that span reads GT. At K300 the chain carries N6-(pyridoxal phosphate)lysine. Residue T332 coordinates pyridoxal 5'-phosphate.

It belongs to the class-III pyridoxal-phosphate-dependent aminotransferase family. Putrescine aminotransferase subfamily. Pyridoxal 5'-phosphate is required as a cofactor.

The catalysed reaction is an alkane-alpha,omega-diamine + 2-oxoglutarate = an omega-aminoaldehyde + L-glutamate. It carries out the reaction putrescine + 2-oxoglutarate = 1-pyrroline + L-glutamate + H2O. It catalyses the reaction cadaverine + 2-oxoglutarate = 5-aminopentanal + L-glutamate. The protein operates within amine and polyamine degradation; putrescine degradation; 4-aminobutanal from putrescine (transaminase route): step 1/1. In terms of biological role, catalyzes the aminotransferase reaction from putrescine to 2-oxoglutarate, leading to glutamate and 4-aminobutanal, which spontaneously cyclizes to form 1-pyrroline. This is the first step in one of two pathways for putrescine degradation, where putrescine is converted into 4-aminobutanoate (gamma-aminobutyrate or GABA) via 4-aminobutanal. Also functions as a cadaverine transaminase in a a L-lysine degradation pathway to succinate that proceeds via cadaverine, glutarate and L-2-hydroxyglutarate. This is Putrescine aminotransferase from Escherichia coli O6:K15:H31 (strain 536 / UPEC).